Here is a 367-residue protein sequence, read N- to C-terminus: Alanine racemase (367 aa).

The active-site Proton acceptor; specific for D-alanine is the K35. K35 is subject to N6-(pyridoxal phosphate)lysine. R130 is a substrate binding site. Y258 (proton acceptor; specific for L-alanine) is an active-site residue. M306 is a binding site for substrate.

Belongs to the alanine racemase family. Pyridoxal 5'-phosphate serves as cofactor.

The enzyme catalyses L-alanine = D-alanine. Its pathway is amino-acid biosynthesis; D-alanine biosynthesis; D-alanine from L-alanine: step 1/1. Its function is as follows. Catalyzes the interconversion of L-alanine and D-alanine. May also act on other amino acids. This chain is Alanine racemase (alr), found in Acinetobacter baumannii (strain SDF).